We begin with the raw amino-acid sequence, 148 residues long: MVRFIFVSFGLLVVFLSLSGIGAGFCCPWGWSSYDEHCYQVFQQKMNWEDAEKFCIQQHKGSHLVSFHSSEEVDLVTSKTFPILKHDFVWMGLSNVWNECTREWSDGTKLDYKAWSGQSDCIVSKTTDNQWLSMDCSSKRYIVCKFQA.

Residues 1–23 (MVRFIFVSFGLLVVFLSLSGIGA) form the signal peptide. 3 disulfides stabilise this stretch: C27-C38, C55-C144, and C121-C136. Positions 34–145 (YDEHCYQVFQ…CSSKRYIVCK (112 aa)) constitute a C-type lectin domain.

Belongs to the snaclec family. In terms of assembly, tetramer of 4 heterodimers of alpha and beta subunits; disulfide-linked. Expressed by the venom gland.

It is found in the secreted. Its function is as follows. Snaclec that strongly induces platelet aggregation, in a dose-dependent manner. In Protobothrops jerdonii (Jerdon's pitviper), this protein is Snaclec jerdonuxin subunit beta.